A 286-amino-acid polypeptide reads, in one-letter code: Pantothenate synthetase (286 aa).

Met-31–His-38 serves as a coordination point for ATP. The Proton donor role is filled by His-38. Gln-62 is a binding site for (R)-pantoate. Residue Gln-62 coordinates beta-alanine. Gly-148–Asp-151 provides a ligand contact to ATP. (R)-pantoate is bound at residue Gln-154. ATP-binding positions include Val-177 and Lys-185 to Arg-188.

It belongs to the pantothenate synthetase family. Homodimer.

Its subcellular location is the cytoplasm. It catalyses the reaction (R)-pantoate + beta-alanine + ATP = (R)-pantothenate + AMP + diphosphate + H(+). Its pathway is cofactor biosynthesis; (R)-pantothenate biosynthesis; (R)-pantothenate from (R)-pantoate and beta-alanine: step 1/1. Functionally, catalyzes the condensation of pantoate with beta-alanine in an ATP-dependent reaction via a pantoyl-adenylate intermediate. The protein is Pantothenate synthetase of Staphylococcus carnosus (strain TM300).